A 418-amino-acid polypeptide reads, in one-letter code: E3 ubiquitin-protein ligase makorin-2 (418 aa).

2 consecutive C3H1-type zinc fingers follow at residues 2-29 and 31-58; these read NTKHVTCRYFLHGVCREGGRCLFSHDLA and SKPSTVCRFYQRGQCAYGARCRYDHVKP. A disordered region spans residues 76–100; that stretch reads ESTPPLLPTQEAAAPVTKSAPQRRE. The C3H1-type 3 zinc finger occupies 164 to 191; sequence DAPQQLCPFAQAGGCHYGESCPYIHGNV. The segment at 192 to 221 is makorin-type Cys-His; the sequence is CEICGLQVLHPYDQEQRGHHEKLCMANFER. The RING-type zinc-finger motif lies at 237–291; that stretch reads CSICMERVYDKQSPSERRFGILSNCHHTYCLACIRQWRCARQFENPVIKSCPECR. A C3H1-type 4 zinc finger spans residues 320-349; that stretch reads GMGKKACKYFDQGRGTCPFGGKCLYLHAYP.

Its subcellular location is the cytoplasm. The protein resides in the nucleus. The enzyme catalyses S-ubiquitinyl-[E2 ubiquitin-conjugating enzyme]-L-cysteine + [acceptor protein]-L-lysine = [E2 ubiquitin-conjugating enzyme]-L-cysteine + N(6)-ubiquitinyl-[acceptor protein]-L-lysine.. Its pathway is protein modification; protein ubiquitination. E3 ubiquitin ligase catalyzing the covalent attachment of ubiquitin moieties onto substrate proteins. Inhibits neurogenesis and axis formation during embryonic development by modulating the phosphatidylinositol 3-kinase (PI3K) pathway. Acts downstream of PI3K and akt1 to up-regulate gsk3b mRNA expression. In Xenopus tropicalis (Western clawed frog), this protein is E3 ubiquitin-protein ligase makorin-2 (mkrn2).